The following is a 406-amino-acid chain: Acetylornithine/succinyldiaminopimelate aminotransferase (406 aa).

Pyridoxal 5'-phosphate-binding positions include 108–109 (GT) and Phe-141. Residue Arg-144 participates in N(2)-acetyl-L-ornithine binding. Residue 226-229 (DEVQ) participates in pyridoxal 5'-phosphate binding. Lys-255 bears the N6-(pyridoxal phosphate)lysine mark. Position 283 (Ser-283) interacts with N(2)-acetyl-L-ornithine. Pyridoxal 5'-phosphate is bound at residue Thr-284.

The protein belongs to the class-III pyridoxal-phosphate-dependent aminotransferase family. ArgD subfamily. As to quaternary structure, homodimer. Pyridoxal 5'-phosphate serves as cofactor.

It localises to the cytoplasm. It carries out the reaction N(2)-acetyl-L-ornithine + 2-oxoglutarate = N-acetyl-L-glutamate 5-semialdehyde + L-glutamate. The catalysed reaction is N-succinyl-(2S,6S)-2,6-diaminopimelate + 2-oxoglutarate = (S)-2-succinylamino-6-oxoheptanedioate + L-glutamate. Its pathway is amino-acid biosynthesis; L-arginine biosynthesis; N(2)-acetyl-L-ornithine from L-glutamate: step 4/4. The protein operates within amino-acid biosynthesis; L-lysine biosynthesis via DAP pathway; LL-2,6-diaminopimelate from (S)-tetrahydrodipicolinate (succinylase route): step 2/3. Functionally, involved in both the arginine and lysine biosynthetic pathways. The protein is Acetylornithine/succinyldiaminopimelate aminotransferase of Escherichia coli O157:H7.